The sequence spans 84 residues: RNA-binding protein Hfq (84 aa).

Residues 11–71 (DVFLNFIRKN…ISTVMPSTPI (61 aa)) form the Sm domain.

The protein belongs to the Hfq family. As to quaternary structure, homohexamer.

Its function is as follows. RNA chaperone that binds small regulatory RNA (sRNAs) and mRNAs to facilitate mRNA translational regulation in response to envelope stress, environmental stress and changes in metabolite concentrations. Also binds with high specificity to tRNAs. This chain is RNA-binding protein Hfq, found in Paramagnetospirillum magneticum (strain ATCC 700264 / AMB-1) (Magnetospirillum magneticum).